Consider the following 186-residue polypeptide: ATP synthase subunit delta (186 aa).

The protein belongs to the ATPase delta chain family. As to quaternary structure, F-type ATPases have 2 components, F(1) - the catalytic core - and F(0) - the membrane proton channel. F(1) has five subunits: alpha(3), beta(3), gamma(1), delta(1), epsilon(1). F(0) has three main subunits: a(1), b(2) and c(10-14). The alpha and beta chains form an alternating ring which encloses part of the gamma chain. F(1) is attached to F(0) by a central stalk formed by the gamma and epsilon chains, while a peripheral stalk is formed by the delta and b chains.

The protein localises to the cell inner membrane. F(1)F(0) ATP synthase produces ATP from ADP in the presence of a proton or sodium gradient. F-type ATPases consist of two structural domains, F(1) containing the extramembraneous catalytic core and F(0) containing the membrane proton channel, linked together by a central stalk and a peripheral stalk. During catalysis, ATP synthesis in the catalytic domain of F(1) is coupled via a rotary mechanism of the central stalk subunits to proton translocation. Its function is as follows. This protein is part of the stalk that links CF(0) to CF(1). It either transmits conformational changes from CF(0) to CF(1) or is implicated in proton conduction. The protein is ATP synthase subunit delta of Ruegeria pomeroyi (strain ATCC 700808 / DSM 15171 / DSS-3) (Silicibacter pomeroyi).